The chain runs to 636 residues: 1-deoxy-D-xylulose-5-phosphate synthase (636 aa).

Thiamine diphosphate-binding positions include His-74 and 115 to 117; that span reads GHS. Asp-146 serves as a coordination point for Mg(2+). Thiamine diphosphate is bound by residues 147 to 148, Asn-175, Tyr-286, and Glu-367; that span reads GA. Residue Asn-175 participates in Mg(2+) binding.

The protein belongs to the transketolase family. DXPS subfamily. In terms of assembly, homodimer. It depends on Mg(2+) as a cofactor. Requires thiamine diphosphate as cofactor.

It carries out the reaction D-glyceraldehyde 3-phosphate + pyruvate + H(+) = 1-deoxy-D-xylulose 5-phosphate + CO2. Its pathway is metabolic intermediate biosynthesis; 1-deoxy-D-xylulose 5-phosphate biosynthesis; 1-deoxy-D-xylulose 5-phosphate from D-glyceraldehyde 3-phosphate and pyruvate: step 1/1. Functionally, catalyzes the acyloin condensation reaction between C atoms 2 and 3 of pyruvate and glyceraldehyde 3-phosphate to yield 1-deoxy-D-xylulose-5-phosphate (DXP). The protein is 1-deoxy-D-xylulose-5-phosphate synthase of Halothermothrix orenii (strain H 168 / OCM 544 / DSM 9562).